Consider the following 535-residue polypeptide: PAC-1 interacting and coiled-coil domain-containing protein 1 (535 aa).

Positions 1 to 67 (MIITTPRRAN…KQTPPRSPVI (67 aa)) are disordered. The span at 36 to 57 (SSTTPSSIGSSSSSSSSYASST) shows a compositional bias: low complexity. 2 coiled-coil regions span residues 109-172 (KLQY…RDLS) and 198-242 (SLMK…RQSL). Disordered regions lie at residues 254–277 (NESEDLGCGSSEQSGGSEGHNDEE) and 503–535 (TCRPTTTLISSTQPAQRSVSVEKNNNNNVHTHN). Residues 503–525 (TCRPTTTLISSTQPAQRSVSVEK) are compositionally biased toward polar residues. The segment covering 526 to 535 (NNNNNVHTHN) has biased composition (low complexity).

It belongs to the CCDC85 family. In terms of assembly, interacts with pac-1 and jac-1.

It is found in the cell junction. The protein localises to the adherens junction. Linker protein which helps to recruit the Rho GTPase-activating protein, pac-1, to adherens junctions. The protein is PAC-1 interacting and coiled-coil domain-containing protein 1 of Caenorhabditis elegans.